Consider the following 480-residue polypeptide: Adenosylhomocysteinase (480 aa).

Residues Thr-63, Asp-142, and Glu-203 each contribute to the substrate site. 204–206 is an NAD(+) binding site; that stretch reads TTT. Substrate-binding residues include Lys-233 and Asp-237. NAD(+) contacts are provided by residues Asn-238, 267–272, Glu-290, Asn-325, 346–348, and Asn-394; these read GYGDVG and IGH.

This sequence belongs to the adenosylhomocysteinase family. Requires NAD(+) as cofactor.

The protein localises to the cytoplasm. The enzyme catalyses S-adenosyl-L-homocysteine + H2O = L-homocysteine + adenosine. The protein operates within amino-acid biosynthesis; L-homocysteine biosynthesis; L-homocysteine from S-adenosyl-L-homocysteine: step 1/1. Functionally, may play a key role in the regulation of the intracellular concentration of adenosylhomocysteine. This Xanthomonas campestris pv. campestris (strain 8004) protein is Adenosylhomocysteinase.